A 157-amino-acid chain; its full sequence is Small ribosomal subunit protein uS7 (157 aa).

It belongs to the universal ribosomal protein uS7 family. Part of the 30S ribosomal subunit. Contacts proteins S9 and S11.

Functionally, one of the primary rRNA binding proteins, it binds directly to 16S rRNA where it nucleates assembly of the head domain of the 30S subunit. Is located at the subunit interface close to the decoding center, probably blocks exit of the E-site tRNA. The sequence is that of Small ribosomal subunit protein uS7 from Leptospira borgpetersenii serovar Hardjo-bovis (strain JB197).